A 79-amino-acid chain; its full sequence is MPKRILQGVVVGDKNEKTVVVRVERRFAHPLLQKTVRRSKKYKAHDENNQYKIGDTVSIEECAPISKDKRWTVISAQGK.

It belongs to the universal ribosomal protein uS17 family. In terms of assembly, part of the 30S ribosomal subunit.

Its function is as follows. One of the primary rRNA binding proteins, it binds specifically to the 5'-end of 16S ribosomal RNA. In Rhizobium johnstonii (strain DSM 114642 / LMG 32736 / 3841) (Rhizobium leguminosarum bv. viciae), this protein is Small ribosomal subunit protein uS17.